The following is a 156-amino-acid chain: uncharacterized protein (156 aa).

The N-acetyltransferase domain maps to 1-145; the sequence is MIIRKFSSKD…DAILMIKKKP (145 aa).

The protein belongs to the acetyltransferase family.

Its subcellular location is the cytoplasm. This is an uncharacterized protein from Methanocaldococcus jannaschii (strain ATCC 43067 / DSM 2661 / JAL-1 / JCM 10045 / NBRC 100440) (Methanococcus jannaschii).